A 47-amino-acid chain; its full sequence is Delta-actitoxin-Aspp1b (47 aa).

Cystine bridges form between Cys4–Cys44, Cys6–Cys34, and Cys27–Cys45.

It belongs to the sea anemone sodium channel inhibitory toxin family. Type I subfamily.

Its subcellular location is the secreted. The protein localises to the nematocyst. Functionally, binds specifically to voltage-gated sodium channels (Nav), thereby delaying their inactivation during signal transduction. Has a longer mammalian heart stimulation effect than Hk2a, Hk8a and Hk16a. This Anthopleura sp. (strain 'Zhanjiang') (Sea anemone) protein is Delta-actitoxin-Aspp1b.